The primary structure comprises 239 residues: uncharacterized protein (239 aa).

Belongs to the initiator RepB protein family.

In terms of biological role, mutations in ORF 239 affects the incN plasmid pUC1 E.coli polA-independence but not its autonomous replication ability. This is an uncharacterized protein from Escherichia coli.